Here is a 551-residue protein sequence, read N- to C-terminus: Malate synthase, glyoxysomal (551 aa).

Catalysis depends on R174, which acts as the Proton acceptor. D458 serves as the catalytic Proton donor.

Belongs to the malate synthase family.

It is found in the glyoxysome. It catalyses the reaction glyoxylate + acetyl-CoA + H2O = (S)-malate + CoA + H(+). It participates in carbohydrate metabolism; glyoxylate cycle; (S)-malate from isocitrate: step 2/2. The chain is Malate synthase, glyoxysomal (PMS1) from Candida tropicalis (Yeast).